The following is a 1114-amino-acid chain: Hephaestin-like protein (1114 aa).

Residues 1 to 26 (MMDRSNAAFVLTACFIFSQLICHVAA) form the signal peptide. 6 Plastocyanin-like domains span residues 27 to 210 (ITRT…LICR), 218 to 365 (QQSG…VTKC), 380 to 562 (KRTY…LLTC), 572 to 719 (TRKD…VNTC), 730 to 915 (KTRD…LIIC), and 924 to 1114 (TEER…LLKA). The Extracellular segment spans residues 27 to 1091 (ITRTYYIAAV…KTTPKPITAA (1065 aa)). Asparagine 121 carries N-linked (GlcNAc...) asparagine glycosylation. Cu cation is bound by residues histidine 129, histidine 131, histidine 189, and histidine 191. An intrachain disulfide couples cysteine 183 to cysteine 209. Asparagine 236 is a glycosylation site (N-linked (GlcNAc...) asparagine). Residues cysteine 284 and cysteine 365 are joined by a disulfide bond. Residues histidine 303, cysteine 346, and histidine 351 each coordinate Cu cation. 3 N-linked (GlcNAc...) asparagine glycosylation sites follow: asparagine 361, asparagine 478, and asparagine 489. 2 disulfides stabilise this stretch: cysteine 536–cysteine 562 and cysteine 638–cysteine 719. Positions 657, 700, 705, and 710 each coordinate Cu cation. Asparagine 831 is a glycosylation site (N-linked (GlcNAc...) asparagine). Cysteine 889 and cysteine 915 form a disulfide bridge. Asparagine 944 carries an N-linked (GlcNAc...) asparagine glycan. 8 residues coordinate Cu cation: histidine 1014, histidine 1017, histidine 1019, histidine 1059, cysteine 1060, histidine 1061, histidine 1065, and methionine 1070. A helical membrane pass occupies residues 1092-1112 (SSFVTSSIFIYLSFPVLAMLL). Residues 1113–1114 (KA) are Cytoplasmic-facing.

Belongs to the multicopper oxidase family. It depends on Cu cation as a cofactor. In terms of tissue distribution, component of the acid-insoluble and acid-soluble organic matrix of the aragonitic skeleton (at protein level).

Its subcellular location is the membrane. Functionally, may function as a ferroxidase and may be involved in copper transport and homeostasis. The chain is Hephaestin-like protein from Acropora millepora (Staghorn coral).